The chain runs to 347 residues: Mitochondrial genome maintenance exonuclease 1 (347 aa).

Residues Asp-246, Asp-259, and Lys-261 contribute to the active site.

The protein belongs to the MGME1 family.

It localises to the mitochondrion. In terms of biological role, single-stranded DNA (ssDNA) metal-dependent exonuclease involved in mitochondrial genome maintenance. Has preference for 5'-3' exonuclease activity. Necessary for maintenance of proper 7S DNA levels. Probably involved in mitochondrial DNA (mtDNA) repair. Specifically binds 5-hydroxymethylcytosine (5hmC)-containing DNA in stem cells. This is Mitochondrial genome maintenance exonuclease 1 (mgme1) from Xenopus tropicalis (Western clawed frog).